The chain runs to 289 residues: Protoheme IX farnesyltransferase (289 aa).

Helical transmembrane passes span 9–29, 35–55, 89–109, 110–130, 138–158, 164–184, 188–208, 228–248, and 269–289; these read VALMKLRVVELLLITTVPVMM, MPSLWLIAVTLVAGTLAAGSA, LTFGIVIGIVSTLMFGLLVNW, PSALLADGAIAFYVFVYTLGL, IVIGGAAGCFPVLIGWSAVTG, AVLLFAVVFFWTPPHFWALAM, DDYAAAGIPMLPVVAPVEVVT, VAHTGPVYLVSAVVVGAWFLA, and FHMSITYLTLLFVAIAVTAVV.

It belongs to the UbiA prenyltransferase family. Protoheme IX farnesyltransferase subfamily.

The protein resides in the cell membrane. It catalyses the reaction heme b + (2E,6E)-farnesyl diphosphate + H2O = Fe(II)-heme o + diphosphate. It participates in porphyrin-containing compound metabolism; heme O biosynthesis; heme O from protoheme: step 1/1. Its function is as follows. Converts heme B (protoheme IX) to heme O by substitution of the vinyl group on carbon 2 of heme B porphyrin ring with a hydroxyethyl farnesyl side group. In Frankia alni (strain DSM 45986 / CECT 9034 / ACN14a), this protein is Protoheme IX farnesyltransferase.